The primary structure comprises 362 residues: Outer envelope protein 39, chloroplastic (362 aa).

This sequence belongs to the OEP80 (TC 1.B.33.2) family. In terms of tissue distribution, expressed in germinating seeds. Expressed in the vasculature of roots, cotyledons and leaves.

The protein localises to the plastid. Its subcellular location is the chloroplast outer membrane. Beta-barrel pore-forming protein which possesses voltage-dependent channel activity. Required for proper plastid development. Involved in the maintenance of metabolic homeostasis of full-grown plants. This Arabidopsis thaliana (Mouse-ear cress) protein is Outer envelope protein 39, chloroplastic.